The sequence spans 193 residues: Putative zinc finger protein 726P1 (193 aa).

The segment at 18-40 (YKCKKCGKTFNWSSILTNNKKIH) adopts a C2H2-type 1; degenerate zinc-finger fold. The C2H2-type 2; atypical zinc-finger motif lies at 46–68 (YKCEECGKAFKQHSTLTTHKIIC). A C2H2-type 3; degenerate zinc finger spans residues 74-96 (YRCEECGKAFCQPSTLTRYKRMH). The segment at 102–124 (YKCEECGKAFTQFSTLTKHKRIH) adopts a C2H2-type 4 zinc-finger fold. The segment at 130 to 152 (YKCEESGKAFIWSSGLTEHRRVH) adopts a C2H2-type 5; degenerate zinc-finger fold. The C2H2-type 6 zinc finger occupies 158–180 (YKCEECGKALIQFSTLTRHKRIH).

In Homo sapiens (Human), this protein is Putative zinc finger protein 726P1 (ZNF726P1).